The following is a 346-amino-acid chain: Uroporphyrinogen decarboxylase (346 aa).

Substrate-binding positions include 26–30 (RQAGR), D76, Y153, S208, and H323.

Belongs to the uroporphyrinogen decarboxylase family. In terms of assembly, homodimer.

It is found in the cytoplasm. The catalysed reaction is uroporphyrinogen III + 4 H(+) = coproporphyrinogen III + 4 CO2. It functions in the pathway porphyrin-containing compound metabolism; protoporphyrin-IX biosynthesis; coproporphyrinogen-III from 5-aminolevulinate: step 4/4. Its function is as follows. Catalyzes the decarboxylation of four acetate groups of uroporphyrinogen-III to yield coproporphyrinogen-III. In Prochlorococcus marinus (strain MIT 9312), this protein is Uroporphyrinogen decarboxylase.